A 507-amino-acid polypeptide reads, in one-letter code: Aromatase (507 aa).

Residue C436 coordinates heme.

The protein belongs to the cytochrome P450 family. The cofactor is heme.

The protein resides in the membrane. It catalyses the reaction testosterone + 3 reduced [NADPH--hemoprotein reductase] + 3 O2 = 17beta-estradiol + formate + 3 oxidized [NADPH--hemoprotein reductase] + 4 H2O + 4 H(+). The catalysed reaction is androst-4-ene-3,17-dione + 3 reduced [NADPH--hemoprotein reductase] + 3 O2 = estrone + formate + 3 oxidized [NADPH--hemoprotein reductase] + 4 H2O + 4 H(+). Catalyzes the formation of aromatic C18 estrogens from C19 androgens. This is Aromatase (CYP19A1) from Gallus gallus (Chicken).